Reading from the N-terminus, the 348-residue chain is Protein RecA (348 aa).

65-72 (GPESSGKT) contributes to the ATP binding site.

It belongs to the RecA family.

It localises to the cytoplasm. Functionally, can catalyze the hydrolysis of ATP in the presence of single-stranded DNA, the ATP-dependent uptake of single-stranded DNA by duplex DNA, and the ATP-dependent hybridization of homologous single-stranded DNAs. It interacts with LexA causing its activation and leading to its autocatalytic cleavage. The chain is Protein RecA from Vibrio anguillarum (Listonella anguillarum).